Consider the following 164-residue polypeptide: Sorting nexin-3 (164 aa).

One can recognise a PX domain in the interval glutamate 40–glutamine 163. Arginine 83, serine 85, lysine 114, arginine 120, and arginine 129 together coordinate a 1,2-diacyl-sn-glycero-3-phospho-(1D-myo-inositol-3-phosphate).

Belongs to the sorting nexin family.

The protein resides in the cytoplasm. It localises to the golgi apparatus membrane. It is found in the prevacuolar compartment membrane. In terms of biological role, required for retention of late Golgi membrane proteins. Component of the retrieval machinery that functions by direct interaction with the cytosolic tails of certain TGN membrane proteins during the sorting/budding process at the prevacuolar compartment. Binds phosphatidylinositol 3-phosphate (PtdIns(P3)). This is Sorting nexin-3 (SNX3) from Kluyveromyces lactis (strain ATCC 8585 / CBS 2359 / DSM 70799 / NBRC 1267 / NRRL Y-1140 / WM37) (Yeast).